A 399-amino-acid polypeptide reads, in one-letter code: L-asparaginase-like protein GG20738 (399 aa).

The N-terminal stretch at Met1 to Ser22 is a signal peptide. Cystine bridges form between Cys90/Cys95, Cys189/Cys205, and Cys344/Cys371.

Belongs to the Ntn-hydrolase family.

This chain is L-asparaginase-like protein GG20738, found in Drosophila erecta (Fruit fly).